We begin with the raw amino-acid sequence, 1037 residues long: Tyrosine-protein kinase-like otk (1037 aa).

The N-terminal stretch at 1–23 (MDMDVMMISMCILASTFMAPGWA) is a signal peptide. Ig-like C2-type domains follow at residues 24–109 (STSG…REAS), 110–199 (PPAK…RVMS), 251–365 (PEDL…APLN), 368–464 (PGLL…VSIN), and 469–559 (PKFS…VQLV). Residues 24–582 (STSGFLRVPQ…GGDGFLVTRA (559 aa)) are Extracellular-facing. 5 disulfide bridges follow: cysteine 47–cysteine 96, cysteine 138–cysteine 188, cysteine 276–cysteine 354, cysteine 399–cysteine 448, and cysteine 491–cysteine 543. N-linked (GlcNAc...) asparagine glycosylation is found at asparagine 336, asparagine 418, asparagine 430, asparagine 445, asparagine 513, and asparagine 525. The helical transmembrane segment at 583–603 (VLITMTVALAYIVLVVGLMLW) threads the bilayer. Residues 604–1037 (CRYRRQARKA…SKAMQSVAEK (434 aa)) are Cytoplasmic-facing. Disordered regions lie at residues 623–683 (AGGD…KSVY) and 720–777 (SAQS…KEEE). Polar residues predominate over residues 658 to 676 (KSNGDAQKSDDTACSQQSR). Serine 681 carries the post-translational modification Phosphoserine. One can recognise a Protein kinase; inactive domain in the interval 693–1031 (LSELLQIGRG…QLGSALSKAM (339 aa)). Basic and acidic residues predominate over residues 723–734 (SDKDADTEKQHS). Over residues 739-749 (GSGGSGSGSGS) the composition is skewed to gly residues. Over residues 768–777 (DDIEEIKEEE) the composition is skewed to acidic residues.

The protein belongs to the protein kinase superfamily. Tyr protein kinase family. Insulin receptor subfamily. In terms of assembly, interacts with plexA; component of a receptor complex that mediates the repulsive signaling in response to Semaphorin ligands.

The protein localises to the cell membrane. In terms of biological role, acts as a calcium-dependent, homophilic cell adhesion molecule that regulates neural recognition during the development of the nervous system. Component of the repulsive Plexin signaling response to regulate motor axon guidance at the embryonic stage. Also component of a receptor complex that is required in the adult visual system to innervate the lamina layer; specific targeting of R1-R6 axons. This is Tyrosine-protein kinase-like otk from Drosophila pseudoobscura pseudoobscura (Fruit fly).